Consider the following 238-residue polypeptide: ATP synthase subunit a (238 aa).

The next 5 helical transmembrane spans lie at 18–38 (LTLL…VFWA), 76–96 (YSLL…LGLF), 114–134 (NLAF…IEGV), 166–186 (SLAI…GLIV), and 193–213 (VYWW…SVFI).

Belongs to the ATPase A chain family. As to quaternary structure, F-type ATPases have 2 components, CF(1) - the catalytic core - and CF(0) - the membrane proton channel. CF(1) has five subunits: alpha(3), beta(3), gamma(1), delta(1), epsilon(1). CF(0) has three main subunits: a(1), b(2) and c(9-12). The alpha and beta chains form an alternating ring which encloses part of the gamma chain. CF(1) is attached to CF(0) by a central stalk formed by the gamma and epsilon chains, while a peripheral stalk is formed by the delta and b chains.

It localises to the cell membrane. Its function is as follows. Key component of the proton channel; it plays a direct role in the translocation of protons across the membrane. The polypeptide is ATP synthase subunit a (Streptococcus pyogenes serotype M5 (strain Manfredo)).